We begin with the raw amino-acid sequence, 353 residues long: Anthranilate phosphoribosyltransferase (353 aa).

5-phospho-alpha-D-ribose 1-diphosphate is bound by residues Gly87, 90–91 (GD), Thr95, 97–100 (NIST), 115–123 (KHGNRAASS), and Thr127. Gly87 provides a ligand contact to anthranilate. Ser99 is a binding site for Mg(2+). Asn118 contacts anthranilate. Arg173 serves as a coordination point for anthranilate. Asp231 and Glu232 together coordinate Mg(2+).

This sequence belongs to the anthranilate phosphoribosyltransferase family. In terms of assembly, homodimer. Mg(2+) is required as a cofactor.

The enzyme catalyses N-(5-phospho-beta-D-ribosyl)anthranilate + diphosphate = 5-phospho-alpha-D-ribose 1-diphosphate + anthranilate. It functions in the pathway amino-acid biosynthesis; L-tryptophan biosynthesis; L-tryptophan from chorismate: step 2/5. Catalyzes the transfer of the phosphoribosyl group of 5-phosphorylribose-1-pyrophosphate (PRPP) to anthranilate to yield N-(5'-phosphoribosyl)-anthranilate (PRA). In Salinispora arenicola (strain CNS-205), this protein is Anthranilate phosphoribosyltransferase.